The primary structure comprises 528 residues: Propionate catabolism operon regulatory protein (528 aa).

One can recognise a Sigma-54 factor interaction domain in the interval M218–F461. A318–E327 contacts ATP. The H-T-H motif DNA-binding region spans K508–K527.

Functionally, involved in the transcriptional regulation of the propionate catabolism operon. This chain is Propionate catabolism operon regulatory protein (prpR), found in Escherichia coli (strain K12).